We begin with the raw amino-acid sequence, 624 residues long: Chaperone protein HtpG (624 aa).

Residues methionine 1 to arginine 338 are a; substrate-binding. The interval glutamate 339–lysine 552 is b. The segment at isoleucine 553–serine 624 is c.

Belongs to the heat shock protein 90 family. Homodimer.

Its subcellular location is the cytoplasm. Functionally, molecular chaperone. Has ATPase activity. The sequence is that of Chaperone protein HtpG from Buchnera aphidicola subsp. Cinara cedri (strain Cc).